The chain runs to 469 residues: Cysteine--tRNA ligase (469 aa).

Cysteine 29 contacts Zn(2+). The 'HIGH' region signature appears at 31–41 (PTVYNYIHIGN). Zn(2+) is bound by residues cysteine 210, histidine 235, and glutamate 239. Positions 267–271 (KMSKS) match the 'KMSKS' region motif. Lysine 270 is an ATP binding site.

It belongs to the class-I aminoacyl-tRNA synthetase family. In terms of assembly, monomer. The cofactor is Zn(2+).

It localises to the cytoplasm. It catalyses the reaction tRNA(Cys) + L-cysteine + ATP = L-cysteinyl-tRNA(Cys) + AMP + diphosphate. This is Cysteine--tRNA ligase from Thermosipho melanesiensis (strain DSM 12029 / CIP 104789 / BI429).